The sequence spans 81 residues: Costars family protein ABRACL (81 aa).

At methionine 1 the chain carries N-acetylmethionine.

This sequence belongs to the costars family.

The protein is Costars family protein ABRACL (Abracl) of Mus musculus (Mouse).